Consider the following 137-residue polypeptide: Large ribosomal subunit protein uL16 (137 aa).

Belongs to the universal ribosomal protein uL16 family. In terms of assembly, part of the 50S ribosomal subunit.

Binds 23S rRNA and is also seen to make contacts with the A and possibly P site tRNAs. This is Large ribosomal subunit protein uL16 from Pseudomonas paraeruginosa (strain DSM 24068 / PA7) (Pseudomonas aeruginosa (strain PA7)).